Here is a 467-residue protein sequence, read N- to C-terminus: Asparagine--tRNA ligase (467 aa).

Belongs to the class-II aminoacyl-tRNA synthetase family. In terms of assembly, homodimer.

It localises to the cytoplasm. The catalysed reaction is tRNA(Asn) + L-asparagine + ATP = L-asparaginyl-tRNA(Asn) + AMP + diphosphate + H(+). The sequence is that of Asparagine--tRNA ligase from Pasteurella multocida (strain Pm70).